Reading from the N-terminus, the 147-residue chain is Large ribosomal subunit protein uL13 (147 aa).

This sequence belongs to the universal ribosomal protein uL13 family. Part of the 50S ribosomal subunit.

Its function is as follows. This protein is one of the early assembly proteins of the 50S ribosomal subunit, although it is not seen to bind rRNA by itself. It is important during the early stages of 50S assembly. The protein is Large ribosomal subunit protein uL13 of Ligilactobacillus salivarius (strain UCC118) (Lactobacillus salivarius).